Reading from the N-terminus, the 320-residue chain is Glutathione synthetase (320 aa).

The ATP-grasp domain occupies 133-317; it reads KMYTLQFAAV…LGEKVICWLE (185 aa). Position 159–215 (159–215) interacts with ATP; the sequence is LEEHGAAVLKPLGGKAGEGILFLDPGDRNFNSLVEISTQHGKEPVMVQRFLPEAKEG. Mg(2+) is bound by residues glutamate 288 and asparagine 290.

The protein belongs to the prokaryotic GSH synthase family. Mg(2+) is required as a cofactor. It depends on Mn(2+) as a cofactor.

It carries out the reaction gamma-L-glutamyl-L-cysteine + glycine + ATP = glutathione + ADP + phosphate + H(+). The protein operates within sulfur metabolism; glutathione biosynthesis; glutathione from L-cysteine and L-glutamate: step 2/2. In Synechocystis sp. (strain ATCC 27184 / PCC 6803 / Kazusa), this protein is Glutathione synthetase.